The chain runs to 227 residues: ATP-dependent dethiobiotin synthetase BioD (227 aa).

12-17 (DAGKTH) is a binding site for ATP. T16 lines the Mg(2+) pocket. K37 is a catalytic residue. S41 lines the substrate pocket. Residues D54, 116–119 (EGAG), 176–177 (NQ), and 205–207 (PYS) each bind ATP. Residues D54 and E116 each coordinate Mg(2+).

This sequence belongs to the dethiobiotin synthetase family. In terms of assembly, homodimer. It depends on Mg(2+) as a cofactor.

The protein localises to the cytoplasm. It carries out the reaction (7R,8S)-7,8-diammoniononanoate + CO2 + ATP = (4R,5S)-dethiobiotin + ADP + phosphate + 3 H(+). The protein operates within cofactor biosynthesis; biotin biosynthesis; biotin from 7,8-diaminononanoate: step 1/2. Functionally, catalyzes a mechanistically unusual reaction, the ATP-dependent insertion of CO2 between the N7 and N8 nitrogen atoms of 7,8-diaminopelargonic acid (DAPA, also called 7,8-diammoniononanoate) to form a ureido ring. In Pseudoalteromonas translucida (strain TAC 125), this protein is ATP-dependent dethiobiotin synthetase BioD.